We begin with the raw amino-acid sequence, 283 residues long: Pantothenate synthetase (283 aa).

ATP is bound at residue 30 to 37 (MGNLHDGH). Residue histidine 37 is the Proton donor of the active site. Glutamine 61 serves as a coordination point for (R)-pantoate. Residue glutamine 61 participates in beta-alanine binding. 149–152 (GEKD) provides a ligand contact to ATP. Glutamine 155 contacts (R)-pantoate. ATP is bound by residues valine 178 and 186–189 (LSSR).

Belongs to the pantothenate synthetase family. As to quaternary structure, homodimer.

The protein localises to the cytoplasm. The catalysed reaction is (R)-pantoate + beta-alanine + ATP = (R)-pantothenate + AMP + diphosphate + H(+). Its pathway is cofactor biosynthesis; (R)-pantothenate biosynthesis; (R)-pantothenate from (R)-pantoate and beta-alanine: step 1/1. In terms of biological role, catalyzes the condensation of pantoate with beta-alanine in an ATP-dependent reaction via a pantoyl-adenylate intermediate. This is Pantothenate synthetase from Salmonella arizonae (strain ATCC BAA-731 / CDC346-86 / RSK2980).